Reading from the N-terminus, the 36-residue chain is Cytochrome b6-f complex subunit 7 (36 aa).

A helical transmembrane segment spans residues 5–25 (IFFVAGLVFVLTLVGMAIGFG).

This sequence belongs to the PetM family. In terms of assembly, the 4 large subunits of the cytochrome b6-f complex are cytochrome b6, subunit IV (17 kDa polypeptide, PetD), cytochrome f and the Rieske protein, while the 4 small subunits are PetG, PetL, PetM and PetN. The complex functions as a dimer.

The protein localises to the cell inner membrane. In terms of biological role, component of the cytochrome b6-f complex, which mediates electron transfer between photosystem II (PSII) and photosystem I (PSI), cyclic electron flow around PSI, and state transitions. This chain is Cytochrome b6-f complex subunit 7, found in Gloeobacter violaceus (strain ATCC 29082 / PCC 7421).